A 313-amino-acid polypeptide reads, in one-letter code: Small glutamine-rich tetratricopeptide repeat-containing protein alpha (313 aa).

The interval 66-100 is disordered; it reads ATGKEMPQDLRSPARTPPSEEDSAEAERLKTEGNE. Phosphoserine is present on Ser77. Thr81 is modified (phosphothreonine). Position 84 is a phosphoserine (Ser84). Residues 90-100 are compositionally biased toward basic and acidic residues; the sequence is EAERLKTEGNE. TPR repeat units follow at residues 91-124, 125-158, and 159-192; these read AERLKTEGNEQMKVENFEAAVHFYGKAIELNPAN, AVYFCNRAAAYSKLGNYAGAVQDCERAICIDPAY, and SKAYGRMGLALSSLNKHVEAVAYYKKALELDPDN. Lys137 is subject to N6-acetyllysine. The tract at residues 250 to 269 is disordered; the sequence is MISGGNNPLGTPGTSPSQND. Residue Ser301 is modified to Phosphoserine. Thr303 carries the phosphothreonine modification. Ser305 carries the post-translational modification Phosphoserine.

Belongs to the SGT family. Homodimer. Homooligomer. Interacts with DNAJC5 and DNAJC5B. Interacts (via TPR repeats) with HSP90AA1. Interacts (via Gln-rich region) with SLC2A1. Interacts with HSP90AB1. Interacts (via TPR repeats) with HSPA8/Hsc70; the interaction is direct. Interacts with BAG6 (via ubiquitin-like domain); interaction prevents interaction between BAG6 and RNF126. Forms a multiprotein complex, at least composed of DNAJB12, DNAJB14, HSPA8/Hsc70 and SGTA; interaction with DNAJB14 and HSPA8/Hsc70 is direct. In terms of assembly, (Microbial infection) Interacts with Vpu and Gag from HIV-1. As to quaternary structure, (Microbial infection) Interacts with SARS-CoV accessory protein 7a. As to expression, ubiquitous.

It localises to the cytoplasm. The protein localises to the nucleus. Co-chaperone that binds misfolded and hydrophobic patches-containing client proteins in the cytosol. Mediates their targeting to the endoplasmic reticulum but also regulates their sorting to the proteasome when targeting fails. Functions in tail-anchored/type II transmembrane proteins membrane insertion constituting with ASNA1 and the BAG6 complex a targeting module. Functions upstream of the BAG6 complex and ASNA1, binding more rapidly the transmembrane domain of newly synthesized proteins. It is also involved in the regulation of the endoplasmic reticulum-associated misfolded protein catabolic process via its interaction with BAG6: collaborates with the BAG6 complex to maintain hydrophobic substrates in non-ubiquitinated states. Competes with RNF126 for interaction with BAG6, preventing the ubiquitination of client proteins associated with the BAG6 complex. Binds directly to HSC70 and HSP70 and regulates their ATPase activity. In terms of biological role, (Microbial infection) In case of infection by polyomavirus, involved in the virus endoplasmic reticulum membrane penetration and infection via interaction with DNAJB12, DNAJB14 and HSPA8/Hsc70. The chain is Small glutamine-rich tetratricopeptide repeat-containing protein alpha (SGTA) from Homo sapiens (Human).